A 565-amino-acid chain; its full sequence is Proline--tRNA ligase (565 aa).

The protein belongs to the class-II aminoacyl-tRNA synthetase family. ProS type 1 subfamily. In terms of assembly, homodimer.

Its subcellular location is the cytoplasm. The enzyme catalyses tRNA(Pro) + L-proline + ATP = L-prolyl-tRNA(Pro) + AMP + diphosphate. Its function is as follows. Catalyzes the attachment of proline to tRNA(Pro) in a two-step reaction: proline is first activated by ATP to form Pro-AMP and then transferred to the acceptor end of tRNA(Pro). As ProRS can inadvertently accommodate and process non-cognate amino acids such as alanine and cysteine, to avoid such errors it has two additional distinct editing activities against alanine. One activity is designated as 'pretransfer' editing and involves the tRNA(Pro)-independent hydrolysis of activated Ala-AMP. The other activity is designated 'posttransfer' editing and involves deacylation of mischarged Ala-tRNA(Pro). The misacylated Cys-tRNA(Pro) is not edited by ProRS. The polypeptide is Proline--tRNA ligase (Lactobacillus acidophilus (strain ATCC 700396 / NCK56 / N2 / NCFM)).